The following is a 425-amino-acid chain: Histidine--tRNA ligase (425 aa).

It belongs to the class-II aminoacyl-tRNA synthetase family. As to quaternary structure, homodimer.

The protein resides in the cytoplasm. The enzyme catalyses tRNA(His) + L-histidine + ATP = L-histidyl-tRNA(His) + AMP + diphosphate + H(+). This is Histidine--tRNA ligase from Listeria innocua serovar 6a (strain ATCC BAA-680 / CLIP 11262).